The sequence spans 213 residues: Holliday junction branch migration complex subunit RuvA (213 aa).

The segment at 1–63 is domain I; that stretch reads MISFLRGTVA…EDSMTLFGFA (63 aa). Residues 64–140 are domain II; that stretch reads DDDEREVFEV…LVPHGTAPAA (77 aa). Residues 140–144 form a flexible linker region; it reads AATTA. A domain III region spans residues 145 to 213; the sequence is AEASWKPQVV…RAGNRVGSRG (69 aa).

Belongs to the RuvA family. As to quaternary structure, homotetramer. Forms an RuvA(8)-RuvB(12)-Holliday junction (HJ) complex. HJ DNA is sandwiched between 2 RuvA tetramers; dsDNA enters through RuvA and exits via RuvB. An RuvB hexamer assembles on each DNA strand where it exits the tetramer. Each RuvB hexamer is contacted by two RuvA subunits (via domain III) on 2 adjacent RuvB subunits; this complex drives branch migration. In the full resolvosome a probable DNA-RuvA(4)-RuvB(12)-RuvC(2) complex forms which resolves the HJ.

The protein localises to the cytoplasm. Functionally, the RuvA-RuvB-RuvC complex processes Holliday junction (HJ) DNA during genetic recombination and DNA repair, while the RuvA-RuvB complex plays an important role in the rescue of blocked DNA replication forks via replication fork reversal (RFR). RuvA specifically binds to HJ cruciform DNA, conferring on it an open structure. The RuvB hexamer acts as an ATP-dependent pump, pulling dsDNA into and through the RuvAB complex. HJ branch migration allows RuvC to scan DNA until it finds its consensus sequence, where it cleaves and resolves the cruciform DNA. This is Holliday junction branch migration complex subunit RuvA from Pseudarthrobacter chlorophenolicus (strain ATCC 700700 / DSM 12829 / CIP 107037 / JCM 12360 / KCTC 9906 / NCIMB 13794 / A6) (Arthrobacter chlorophenolicus).